We begin with the raw amino-acid sequence, 121 residues long: Fluoride-specific ion channel FluC 3 (121 aa).

4 helical membrane passes run 3 to 23 (VFLP…RYLL), 40 to 60 (FTIN…ALGG), 69 to 89 (VLAT…NEMV), and 101 to 121 (AAYL…GFLV). Residues glycine 76 and serine 79 each coordinate Na(+).

Belongs to the fluoride channel Fluc/FEX (TC 1.A.43) family.

It is found in the cell membrane. It carries out the reaction fluoride(in) = fluoride(out). Its activity is regulated as follows. Na(+) is not transported, but it plays an essential structural role and its presence is essential for fluoride channel function. Fluoride-specific ion channel. Important for reducing fluoride concentration in the cell, thus reducing its toxicity. This is Fluoride-specific ion channel FluC 3 from Bifidobacterium longum (strain NCC 2705).